The sequence spans 102 residues: Small ribosomal subunit protein uS10 (102 aa).

The protein belongs to the universal ribosomal protein uS10 family. In terms of assembly, part of the 30S ribosomal subunit.

In terms of biological role, involved in the binding of tRNA to the ribosomes. The chain is Small ribosomal subunit protein uS10 from Fervidobacterium nodosum (strain ATCC 35602 / DSM 5306 / Rt17-B1).